The primary structure comprises 404 residues: Probable tRNA sulfurtransferase (404 aa).

One can recognise a THUMP domain in the interval 60–165 (HEVAESLKEI…DEAAYISYEN (106 aa)). ATP-binding positions include 183–184 (ML), 208–209 (HF), arginine 265, glycine 287, and glutamine 296.

This sequence belongs to the ThiI family.

The protein localises to the cytoplasm. It carries out the reaction [ThiI sulfur-carrier protein]-S-sulfanyl-L-cysteine + a uridine in tRNA + 2 reduced [2Fe-2S]-[ferredoxin] + ATP + H(+) = [ThiI sulfur-carrier protein]-L-cysteine + a 4-thiouridine in tRNA + 2 oxidized [2Fe-2S]-[ferredoxin] + AMP + diphosphate. The enzyme catalyses [ThiS sulfur-carrier protein]-C-terminal Gly-Gly-AMP + S-sulfanyl-L-cysteinyl-[cysteine desulfurase] + AH2 = [ThiS sulfur-carrier protein]-C-terminal-Gly-aminoethanethioate + L-cysteinyl-[cysteine desulfurase] + A + AMP + 2 H(+). Its pathway is cofactor biosynthesis; thiamine diphosphate biosynthesis. In terms of biological role, catalyzes the ATP-dependent transfer of a sulfur to tRNA to produce 4-thiouridine in position 8 of tRNAs, which functions as a near-UV photosensor. Also catalyzes the transfer of sulfur to the sulfur carrier protein ThiS, forming ThiS-thiocarboxylate. This is a step in the synthesis of thiazole, in the thiamine biosynthesis pathway. The sulfur is donated as persulfide by IscS. This is Probable tRNA sulfurtransferase from Streptococcus agalactiae serotype Ia (strain ATCC 27591 / A909 / CDC SS700).